A 225-amino-acid polypeptide reads, in one-letter code: Biosynthetic peptidoglycan transglycosylase (225 aa).

A helical transmembrane segment spans residues 12-32; the sequence is IWFVAWRFLLLFVIVLFLFRF.

The protein belongs to the glycosyltransferase 51 family.

The protein resides in the cell inner membrane. The catalysed reaction is [GlcNAc-(1-&gt;4)-Mur2Ac(oyl-L-Ala-gamma-D-Glu-L-Lys-D-Ala-D-Ala)](n)-di-trans,octa-cis-undecaprenyl diphosphate + beta-D-GlcNAc-(1-&gt;4)-Mur2Ac(oyl-L-Ala-gamma-D-Glu-L-Lys-D-Ala-D-Ala)-di-trans,octa-cis-undecaprenyl diphosphate = [GlcNAc-(1-&gt;4)-Mur2Ac(oyl-L-Ala-gamma-D-Glu-L-Lys-D-Ala-D-Ala)](n+1)-di-trans,octa-cis-undecaprenyl diphosphate + di-trans,octa-cis-undecaprenyl diphosphate + H(+). It participates in cell wall biogenesis; peptidoglycan biosynthesis. Functionally, peptidoglycan polymerase that catalyzes glycan chain elongation from lipid-linked precursors. The chain is Biosynthetic peptidoglycan transglycosylase from Marinomonas sp. (strain MWYL1).